We begin with the raw amino-acid sequence, 514 residues long: Bifunctional NAD(P)H-hydrate repair enzyme Nnr (514 aa).

The interval 1–218 is NAD(P)H-hydrate epimerase; sequence MKLVTSEEIK…IPIEIVNDIV (218 aa). The YjeF N-terminal domain maps to 9–215; the sequence is IKRLEERLER…RLGIPIEIVN (207 aa). The interval 59-63 is NADPHX 1; for epimerase activity; that stretch reads NNGGD. Residues N60 and D125 each coordinate K(+). Residues 129 to 135 form an NADPHX 1; for epimerase activity region; sequence GIGLKRE. D158 contributes to the (6S)-NADPHX binding site. Residue S161 coordinates K(+). The region spanning 226 to 508 is the YjeF C-terminal domain; sequence DWELLKDIVR…KILPLAIDEV (283 aa). An ADP-dependent (S)-NAD(P)H-hydrate dehydratase region spans residues 226–514; sequence DWELLKDIVR…IDEVIRRRNV (289 aa). G333 lines the (6S)-NADPHX pocket. The tract at residues 382–388 is NADPHX 2; for dehydratase activity; that stretch reads HYGEMSR. Residues 419–423 and 439–448 contribute to the ADP site; these read KGPNS and DFLLATAGSG. D449 is a (6S)-NADPHX binding site.

It in the N-terminal section; belongs to the NnrE/AIBP family. In the C-terminal section; belongs to the NnrD/CARKD family. Requires K(+) as cofactor.

The enzyme catalyses (6S)-NADHX + ADP = AMP + phosphate + NADH + H(+). The catalysed reaction is (6S)-NADPHX + ADP = AMP + phosphate + NADPH + H(+). It catalyses the reaction (6R)-NADHX = (6S)-NADHX. It carries out the reaction (6R)-NADPHX = (6S)-NADPHX. Bifunctional enzyme that catalyzes the epimerization of the S- and R-forms of NAD(P)HX and the dehydration of the S-form of NAD(P)HX at the expense of ADP, which is converted to AMP. This allows the repair of both epimers of NAD(P)HX, a damaged form of NAD(P)H that is a result of enzymatic or heat-dependent hydration. The sequence is that of Bifunctional NAD(P)H-hydrate repair enzyme Nnr (nnr) from Dictyoglomus turgidum (strain DSM 6724 / Z-1310).